Reading from the N-terminus, the 272-residue chain is 3-methyl-2-oxobutanoate hydroxymethyltransferase (272 aa).

Mg(2+)-binding residues include Asp42 and Asp86. Residues Asp42 to Ser43, Asp86, and Lys116 contribute to the 3-methyl-2-oxobutanoate site. Glu118 contacts Mg(2+). Glu185 (proton acceptor) is an active-site residue.

Belongs to the PanB family. As to quaternary structure, homodecamer; pentamer of dimers. It depends on Mg(2+) as a cofactor.

It is found in the cytoplasm. It catalyses the reaction 3-methyl-2-oxobutanoate + (6R)-5,10-methylene-5,6,7,8-tetrahydrofolate + H2O = 2-dehydropantoate + (6S)-5,6,7,8-tetrahydrofolate. Its pathway is cofactor biosynthesis; (R)-pantothenate biosynthesis; (R)-pantoate from 3-methyl-2-oxobutanoate: step 1/2. Its function is as follows. Catalyzes the reversible reaction in which hydroxymethyl group from 5,10-methylenetetrahydrofolate is transferred onto alpha-ketoisovalerate to form ketopantoate. The chain is 3-methyl-2-oxobutanoate hydroxymethyltransferase from Prochlorococcus marinus (strain MIT 9313).